The primary structure comprises 204 residues: ATP synthase subunit 4, mitochondrial (204 aa).

Helical transmembrane passes span 27–47 and 52–72; these read GILA…LYVV and ILLV…APLY.

As to quaternary structure, F-type ATP synthases have 2 components, the catalytic core F(1) and the membrane-embedded component F(0), linked together by a central stalk and a peripheral stalk. The central stalk, also called rotor shaft, is often seen as part of F(1). The peripheral stalk is seen as part of F(0). F(0) contains the membrane channel next to the rotor. F-type ATP synthases form dimers but each monomer functions independently in ATP generation. The dimer consists of 18 different polypeptides: ATP1 (subunit alpha, part of F(1), 3 molecules per monomer), ATP2 (subunit beta, part of F(1), 3 molecules per monomer), ATP3 (subunit gamma, part of the central stalk), ATP4 (subunit b, part of the peripheral stalk), ATP5/OSCP (subunit 5/OSCP, part of the peripheral stalk), ATP6 (subunit a, part of the peripheral stalk), ATP7 (subunit d, part of the peripheral stalk), ATP8 (subunit 8, part of the peripheral stalk), OLI1 (subunit c, part of the rotor, 10 molecules per monomer), ATP14 (subunit h, part of the peripheral stalk), ATP15 (subunit epsilon, part of the central stalk), ATP16 (subunit delta, part of the central stalk), ATP17 (subunit f, part of the peripheral stalk), ATP18 (subunit i/j, part of the peripheral stalk). Dimer-specific subunits are ATP19 (subunit k, at interface between monomers), ATP20 (subunit g, at interface between monomers), TIM11 (subunit e, at interface between monomers). Also contains subunit L.

It localises to the mitochondrion inner membrane. In terms of biological role, mitochondrial membrane ATP synthase (F(1)F(0) ATP synthase or Complex V) produces ATP from ADP in the presence of a proton gradient across the membrane which is generated by electron transport complexes of the respiratory chain. F-type ATP synthases consist of two structural domains, F(1) - containing the extramembraneous catalytic core, and F(0) - containing the membrane proton channel, linked together by a central stalk and a peripheral stalk. During catalysis, ATP synthesis in the catalytic domain of F(1) is coupled via a rotary mechanism of the central stalk subunits to proton translocation. Part of the complex F(0) domain and the peripheral stalk, which acts as a stator to hold the catalytic alpha/ATP1(3)beta/ATP2(3) subcomplex and subunit a/ATP6 static relative to the rotary elements. The polypeptide is ATP synthase subunit 4, mitochondrial (Pichia angusta (Yeast)).